Here is an 859-residue protein sequence, read N- to C-terminus: DNA mismatch repair protein MutS (859 aa).

Residue 618–625 (GPNMGGKS) coordinates ATP. The segment at 803-829 (RDHDVQQNTEQQGTQQNMSFVPSAPSP) is disordered. Residues 808–819 (QQNTEQQGTQQN) are compositionally biased toward low complexity.

It belongs to the DNA mismatch repair MutS family.

Its function is as follows. This protein is involved in the repair of mismatches in DNA. It is possible that it carries out the mismatch recognition step. This protein has a weak ATPase activity. This chain is DNA mismatch repair protein MutS, found in Shewanella pealeana (strain ATCC 700345 / ANG-SQ1).